The primary structure comprises 346 residues: MGFLSKLIAKLKPKKSVAKQLKEEVEKQSLFQTNNKTYYQGLKKSATTFAKTINELSKRYVNVDEQFKENLFEGLVLLDVGYHAANKICDAIIEQIKLNRITDFQLIKELIIDQIIVYYIQDKLFDTDLIVKPNFTNVYLFVGVNGVGKTTTLAKIADFFIKQNKRVLLVAGDTFRAGAIEQLNQWAKLLNCDIVLPNPKEQTPAVIFRGVKKGIDDKYDFVLCDTSGRLQNKLNLMNELQKIYQIIQKVSGSEPSETLLVLDGTVGQTGLSQAKVFNEFSKLTGIVLTKMDGSAKGGIILAIKDMFNLPVKLIGFGEKTSDLAIFDLEKYVLGLLNNLNLDNKEN.

Residues 143-150, 225-229, and 289-292 each bind GTP; these read GVNGVGKT, DTSGR, and TKMD.

Belongs to the GTP-binding SRP family. FtsY subfamily. As to quaternary structure, part of the signal recognition particle protein translocation system, which is composed of SRP and FtsY.

It localises to the cell membrane. Its subcellular location is the cytoplasm. It carries out the reaction GTP + H2O = GDP + phosphate + H(+). Involved in targeting and insertion of nascent membrane proteins into the cytoplasmic membrane. Acts as a receptor for the complex formed by the signal recognition particle (SRP) and the ribosome-nascent chain (RNC). The polypeptide is Signal recognition particle receptor FtsY (Mycoplasma genitalium (strain ATCC 33530 / DSM 19775 / NCTC 10195 / G37) (Mycoplasmoides genitalium)).